We begin with the raw amino-acid sequence, 524 residues long: Cytochrome P450 52A6 (524 aa).

A helical membrane pass occupies residues 17–34 (WYTVITLAALVFLISSNI). Cys-472 contributes to the heme binding site.

This sequence belongs to the cytochrome P450 family. Heme serves as cofactor.

The protein localises to the membrane. In terms of biological role, together with an NADPH cytochrome P450 the enzyme system catalyzes the terminal hydroxylation as the first step in the assimilation of alkanes and fatty acids. Preferentially hydroxylates hexadecane. This is Cytochrome P450 52A6 (CYP52A6) from Candida tropicalis (Yeast).